A 426-amino-acid polypeptide reads, in one-letter code: Glucan endo-1,3-beta-glucosidase 11 (426 aa).

The N-terminal stretch at 1–30 (MELTSFHRSSLLFLISLTLIILPTTTTSIG) is a signal peptide. Asn-112 carries an N-linked (GlcNAc...) asparagine glycan. The active-site Proton donor is Glu-121. An N-linked (GlcNAc...) asparagine glycan is attached at Asn-126. Glu-266 acts as the Nucleophile in catalysis. Positions 360 to 372 (GGGTGGGNSSSGG) are enriched in gly residues. A disordered region spans residues 360-389 (GGGTGGGNSSSGGGRDKSPVFPVSPVAPDS). An N-linked (GlcNAc...) asparagine glycan is attached at Asn-367. Residue Ser-398 is the site of GPI-anchor amidated serine attachment. Positions 399-426 (ASPVTGKRKGKGAILSLVVSMLLARHLL) are cleaved as a propeptide — removed in mature form.

The protein belongs to the glycosyl hydrolase 17 family.

It is found in the secreted. The protein resides in the cell wall. The protein localises to the cell membrane. It carries out the reaction Hydrolysis of (1-&gt;3)-beta-D-glucosidic linkages in (1-&gt;3)-beta-D-glucans.. This is Glucan endo-1,3-beta-glucosidase 11 from Arabidopsis thaliana (Mouse-ear cress).